The chain runs to 400 residues: Bifunctional enzyme IspD/IspF (400 aa).

Residues 1–235 form a 2-C-methyl-D-erythritol 4-phosphate cytidylyltransferase region; that stretch reads MSLWTVLLAA…LAEAAAPPVP (235 aa). The interval 236–400 is 2-C-methyl-D-erythritol 2,4-cyclodiphosphate synthase; the sequence is VTGYGYDVHR…VALVSGWRRP (165 aa). The a divalent metal cation site is built by Asp242 and His244. 4-CDP-2-C-methyl-D-erythritol 2-phosphate-binding positions include 242 to 244 and 276 to 277; these read DVH and HS. Residue His284 coordinates a divalent metal cation. Residues 298–300, 303–307, 374–377, and Phe381 contribute to the 4-CDP-2-C-methyl-D-erythritol 2-phosphate site; these read DIG, FPDSN, and TTEE.

In the N-terminal section; belongs to the IspD/TarI cytidylyltransferase family. IspD subfamily. This sequence in the C-terminal section; belongs to the IspF family. It depends on a divalent metal cation as a cofactor.

It catalyses the reaction 2-C-methyl-D-erythritol 4-phosphate + CTP + H(+) = 4-CDP-2-C-methyl-D-erythritol + diphosphate. It carries out the reaction 4-CDP-2-C-methyl-D-erythritol 2-phosphate = 2-C-methyl-D-erythritol 2,4-cyclic diphosphate + CMP. It participates in isoprenoid biosynthesis; isopentenyl diphosphate biosynthesis via DXP pathway; isopentenyl diphosphate from 1-deoxy-D-xylulose 5-phosphate: step 2/6. Its pathway is isoprenoid biosynthesis; isopentenyl diphosphate biosynthesis via DXP pathway; isopentenyl diphosphate from 1-deoxy-D-xylulose 5-phosphate: step 4/6. Functionally, bifunctional enzyme that catalyzes the formation of 4-diphosphocytidyl-2-C-methyl-D-erythritol from CTP and 2-C-methyl-D-erythritol 4-phosphate (MEP) (IspD), and catalyzes the conversion of 4-diphosphocytidyl-2-C-methyl-D-erythritol 2-phosphate (CDP-ME2P) to 2-C-methyl-D-erythritol 2,4-cyclodiphosphate (ME-CPP) with a corresponding release of cytidine 5-monophosphate (CMP) (IspF). This chain is Bifunctional enzyme IspD/IspF, found in Solidesulfovibrio magneticus (strain ATCC 700980 / DSM 13731 / RS-1) (Desulfovibrio magneticus).